The primary structure comprises 508 residues: Aspartic proteinase A3 (508 aa).

An N-terminal signal peptide occupies residues 1–25 (MGTRFQSFLLVFLLSCLILISTASC). Positions 26-69 (ERNGDGTIRIGLKKRKLDRSNRLASQLFLKNRGSHWSPKHYFRL) are cleaved as a propeptide — activation peptide. Residues 87-505 (YYGDITIGTP…DYGKGRVGFA (419 aa)) enclose the Peptidase A1 domain. The active site involves Asp-105. Cystine bridges form between Cys-118-Cys-124 and Cys-283-Cys-287. The active site involves Asp-292. One can recognise a Saposin B-type domain in the interval 317–419 (IVSRECKAVV…AELCDHIPTQ (103 aa)). 4 disulfides stabilise this stretch: Cys-322-Cys-413, Cys-347-Cys-385, Cys-353-Cys-382, and Cys-427-Cys-464. Asn-399 is a glycosylation site (N-linked (GlcNAc...) asparagine).

The protein belongs to the peptidase A1 family. In terms of tissue distribution, expressed in petals, carpels and seed pods.

Its subcellular location is the secreted. Functionally, involved in the processing and degradation of storage proteins. In Arabidopsis thaliana (Mouse-ear cress), this protein is Aspartic proteinase A3 (APA3).